The primary structure comprises 185 residues: Elongation factor P (185 aa).

Belongs to the elongation factor P family.

Its subcellular location is the cytoplasm. The protein operates within protein biosynthesis; polypeptide chain elongation. Functionally, involved in peptide bond synthesis. Stimulates efficient translation and peptide-bond synthesis on native or reconstituted 70S ribosomes in vitro. Probably functions indirectly by altering the affinity of the ribosome for aminoacyl-tRNA, thus increasing their reactivity as acceptors for peptidyl transferase. The sequence is that of Elongation factor P from Dictyoglomus thermophilum (strain ATCC 35947 / DSM 3960 / H-6-12).